The following is a 431-amino-acid chain: Glutamate--tRNA ligase 1 (431 aa).

Residues 6-16 (PSPTGDMHIGN) carry the 'HIGH' region motif. The short motif at 235–239 (KMSKR) is the 'KMSKS' region element. Lys238 is an ATP binding site.

The protein belongs to the class-I aminoacyl-tRNA synthetase family. Glutamate--tRNA ligase type 1 subfamily. As to quaternary structure, monomer.

Its subcellular location is the cytoplasm. The catalysed reaction is tRNA(Glu) + L-glutamate + ATP = L-glutamyl-tRNA(Glu) + AMP + diphosphate. Its function is as follows. Catalyzes the attachment of glutamate to tRNA(Glu) in a two-step reaction: glutamate is first activated by ATP to form Glu-AMP and then transferred to the acceptor end of tRNA(Glu). This chain is Glutamate--tRNA ligase 1, found in Campylobacter jejuni subsp. jejuni serotype O:2 (strain ATCC 700819 / NCTC 11168).